The primary structure comprises 349 residues: Ornithine carbamoyltransferase, mitochondrial (349 aa).

Carbamoyl phosphate contacts are provided by residues 73 to 76, Arg124, His151, and Gln154; that span reads STRT. L-ornithine contacts are provided by Asn195, Asp261, Ser265, and Met266. Cys303 acts as the Proton acceptor in catalysis. Carbamoyl phosphate-binding positions include 303–304 and Arg330; that span reads CL.

Belongs to the aspartate/ornithine carbamoyltransferase superfamily. OTCase family. Homotrimer.

The protein resides in the mitochondrion matrix. It carries out the reaction carbamoyl phosphate + L-ornithine = L-citrulline + phosphate + H(+). Its pathway is amino-acid biosynthesis; L-arginine biosynthesis; L-arginine from L-ornithine and carbamoyl phosphate: step 1/3. This is Ornithine carbamoyltransferase, mitochondrial from Coccidioides immitis (strain RS) (Valley fever fungus).